The primary structure comprises 626 residues: Basic helix-loop-helix ARNT-like protein 1 (626 aa).

Residues 1-60 (MADQRMDISSTISDFMSPGPTDLLSSSLGTSGVDCNRKRKGSSTDYQESMDTDKDDPHGR) are disordered. Serine 17 carries the phosphoserine; by GSK3-beta modification. Over residues 17–32 (SPGPTDLLSSSLGTSG) the composition is skewed to low complexity. Threonine 21 is subject to Phosphothreonine; by GSK3-beta. The Nuclear localization signal signature appears at 36–41 (NRKRKG). The segment covering 51–60 (DTDKDDPHGR) has biased composition (basic and acidic residues). The region spanning 72–125 (NAREAHSQIEKRRRDKMNSFIDELASLVPTCNAMSRKLDKLTVLRMAVQHMKTL) is the bHLH domain. Residue serine 78 is modified to Phosphoserine. Position 90 is a phosphoserine; by CK2 (serine 90). Residues 142–152 (LSDDELKHLIL) carry the Nuclear export signal 1 motif. The PAS 1 domain occupies 143–215 (SDDELKHLIL…EQLSSSDTAP (73 aa)). A Glycyl lysine isopeptide (Lys-Gly) (interchain with G-Cter in SUMO2 and SUMO3) cross-link involves residue lysine 252. Residue lysine 259 forms a Glycyl lysine isopeptide (Lys-Gly) (interchain with G-Cter in SUMO); alternate linkage. Residue lysine 259 forms a Glycyl lysine isopeptide (Lys-Gly) (interchain with G-Cter in SUMO2); alternate linkage. Residues 326–396 (PQPAGGDIKV…ECHRQVLQTR (71 aa)) form the PAS 2 domain. Positions 361 to 369 (LAYLPQELL) match the Nuclear export signal 2 motif. The PAC domain occupies 402–445 (NCYKFKIKDGSFITLRSRWFSFMNPWTKEVEYIVSTNTVVLANV). Disordered regions lie at residues 458–493 (ASPHSMDSMLPSGEGGPKKTHPTVPGIPGGTRAGAG) and 511–596 (GSSP…PSND). Residues 484–493 (IPGGTRAGAG) show a composition bias toward gly residues. Residues 508 to 588 (RIRGSSPSSC…ISIDMIDNDQ (81 aa)) are interaction with CIART. A compositionally biased stretch (low complexity) spans 511–521 (GSSPSSCGSSP). Position 538 is an N6-acetyllysine (lysine 538).

In terms of assembly, component of the circadian clock oscillator which includes the CRY1/2 proteins, CLOCK or NPAS2, BMAL1 or BMAL2, CSNK1D and/or CSNK1E, TIMELESS and the PER1/2/3 proteins. Forms a heterodimer with CLOCK. The CLOCK-BMAL1 heterodimer is required for E-box-dependent transactivation, for CLOCK nuclear translocation and degradation, and, for phosphorylation of both CLOCK and BMAL1. Part of a nuclear complex which also includes RACK1 and PRKCA; RACK1 and PRKCA are recruited to the complex in a circadian manner. Interacts with NPAS2. Interacts with EZH2. Interacts with SUMO3. Interacts with SIRT1. Interacts with AHR. Interacts with ID1, ID2 and ID3. Interacts with DDX4. Interacts with OGT. Interacts with EED and SUZ12. Interacts with MTA1. Interacts with CIART. Interacts with HSP90. Interacts with KAT2B and EP300. Interacts with BHLHE40/DEC1 and BHLHE41/DEC2. Interacts with RELB and the interaction is enhanced in the presence of CLOCK. Interacts with PER1, PER2, CRY1 and CRY2 and this interaction requires a translocation to the nucleus. Interaction of the CLOCK-BMAL1 heterodimer with PER or CRY inhibits transcription activation. Interaction of the CLOCK-BMAL1 with CRY1 is independent of DNA but with PER2 is off DNA. The CLOCK-BMAL1 heterodimer interacts with GSK3B. Interacts with KDM5A. Interacts with KMT2A; in a circadian manner. Interacts with UBE3A. Interacts with PRKCG. Interacts with MAGEL2. Interacts with NCOA2. Interacts with THRAP3. The CLOCK-BMAL1 heterodimer interacts with PASD1. Interacts with PASD1. Interacts with USP9X. Interacts with PIWIL2 (via PIWI domain). Interacts with HDAC3. Interacts with HNF4A. Ubiquitinated, leading to its proteasomal degradation. Deubiquitinated by USP9X. Post-translationally, O-glycosylated; contains O-GlcNAc. O-glycosylation by OGT prevents protein degradation by inhibiting ubiquitination. It also stabilizes the CLOCK-BMAL1 heterodimer thereby increasing CLOCK-BMAL1-mediated transcription of genes in the negative loop of the circadian clock such as PER1/2/3 and CRY1/2. In terms of processing, acetylated on Lys-538 by CLOCK during the repression phase of the circadian cycle. Acetylation facilitates recruitment of CRY1 protein and initiates the repression phase of the circadian cycle. Acetylated at Lys-538 by KAT5 during the activation phase of the cycle, leading to recruitment of the positive transcription elongation factor b (P-TEFb) and BRD4, followed by productive elongation of circadian transcripts. Deacetylated by SIRT1, which may result in decreased protein stability. Phosphorylated upon dimerization with CLOCK. Phosphorylation enhances the transcriptional activity, alters the subcellular localization and decreases the stability of the CLOCK-BMAL1 heterodimer by promoting its degradation. Phosphorylation shows circadian variations in the liver with a peak between CT10 to CT14. Phosphorylation at Ser-90 by CK2 is essential for its nuclear localization, its interaction with CLOCK and controls CLOCK nuclear entry. Dephosphorylation at Ser-78 is important for dimerization with CLOCK and transcriptional activity. Post-translationally, sumoylated on Lys-259 upon dimerization with CLOCK. Predominantly conjugated to poly-SUMO2/3 rather than SUMO1 and the level of these conjugates undergo rhythmic variation, peaking at CT9-CT12. Sumoylation localizes it exclusively to the PML body and promotes its ubiquitination in the PML body, ubiquitin-dependent proteasomal degradation and the transcriptional activity of the CLOCK-BMAL1 heterodimer. In terms of processing, undergoes lysosome-mediated degradation in a time-dependent manner in the liver. Highly expressed in the suprachiasmatic nucleus (SCN). Also expressed in all other tissues examined including kidney, intestine, liver, heart, spleen, brain, muscle, lung, harderian gland and eye. Low expression in kidney and spleen.

The protein resides in the nucleus. The protein localises to the cytoplasm. It localises to the PML body. Its function is as follows. Transcriptional activator which forms a core component of the circadian clock. The circadian clock, an internal time-keeping system, regulates various physiological processes through the generation of approximately 24 hour circadian rhythms in gene expression, which are translated into rhythms in metabolism and behavior. It is derived from the Latin roots 'circa' (about) and 'diem' (day) and acts as an important regulator of a wide array of physiological functions including metabolism, sleep, body temperature, blood pressure, endocrine, immune, cardiovascular, and renal function. Consists of two major components: the central clock, residing in the suprachiasmatic nucleus (SCN) of the brain, and the peripheral clocks that are present in nearly every tissue and organ system. Both the central and peripheral clocks can be reset by environmental cues, also known as Zeitgebers (German for 'timegivers'). The predominant Zeitgeber for the central clock is light, which is sensed by retina and signals directly to the SCN. The central clock entrains the peripheral clocks through neuronal and hormonal signals, body temperature and feeding-related cues, aligning all clocks with the external light/dark cycle. Circadian rhythms allow an organism to achieve temporal homeostasis with its environment at the molecular level by regulating gene expression to create a peak of protein expression once every 24 hours to control when a particular physiological process is most active with respect to the solar day. Transcription and translation of core clock components (CLOCK, NPAS2, BMAL1, BMAL2, PER1, PER2, PER3, CRY1 and CRY2) plays a critical role in rhythm generation, whereas delays imposed by post-translational modifications (PTMs) are important for determining the period (tau) of the rhythms (tau refers to the period of a rhythm and is the length, in time, of one complete cycle). A diurnal rhythm is synchronized with the day/night cycle, while the ultradian and infradian rhythms have a period shorter and longer than 24 hours, respectively. Disruptions in the circadian rhythms contribute to the pathology of cardiovascular diseases, cancer, metabolic syndromes and aging. A transcription/translation feedback loop (TTFL) forms the core of the molecular circadian clock mechanism. Transcription factors, CLOCK or NPAS2 and BMAL1 or BMAL2, form the positive limb of the feedback loop, act in the form of a heterodimer and activate the transcription of core clock genes and clock-controlled genes (involved in key metabolic processes), harboring E-box elements (5'-CACGTG-3') within their promoters. The core clock genes: PER1/2/3 and CRY1/2 which are transcriptional repressors form the negative limb of the feedback loop and interact with the CLOCK|NPAS2-BMAL1|BMAL2 heterodimer inhibiting its activity and thereby negatively regulating their own expression. This heterodimer also activates nuclear receptors NR1D1/2 and RORA/B/G, which form a second feedback loop and which activate and repress BMAL1 transcription, respectively. BMAL1 positively regulates myogenesis and negatively regulates adipogenesis via the transcriptional control of the genes of the canonical Wnt signaling pathway. Plays a role in normal pancreatic beta-cell function; regulates glucose-stimulated insulin secretion via the regulation of antioxidant genes NFE2L2/NRF2 and its targets SESN2, PRDX3, CCLC and CCLM. Negatively regulates the mTORC1 signaling pathway; regulates the expression of MTOR and DEPTOR. Controls diurnal oscillations of Ly6C inflammatory monocytes; rhythmic recruitment of the PRC2 complex imparts diurnal variation to chemokine expression that is necessary to sustain Ly6C monocyte rhythms. Regulates the expression of HSD3B2, STAR, PTGS2, CYP11A1, CYP19A1 and LHCGR in the ovary and also the genes involved in hair growth. Plays an important role in adult hippocampal neurogenesis by regulating the timely entry of neural stem/progenitor cells (NSPCs) into the cell cycle and the number of cell divisions that take place prior to cell-cycle exit. Regulates the circadian expression of CIART and KLF11. The CLOCK-BMAL1 heterodimer regulates the circadian expression of SERPINE1/PAI1, VWF, B3, CCRN4L/NOC, NAMPT, DBP, MYOD1, PPARGC1A, PPARGC1B, SIRT1, GYS2, F7, NGFR, GNRHR, BHLHE40/DEC1, ATF4, MTA1, KLF10 and also genes implicated in glucose and lipid metabolism. Promotes rhythmic chromatin opening, regulating the DNA accessibility of other transcription factors. The NPAS2-BMAL1 heterodimer positively regulates the expression of MAOA, F7 and LDHA and modulates the circadian rhythm of daytime contrast sensitivity by regulating the rhythmic expression of adenylate cyclase type 1 (ADCY1) in the retina. The preferred binding motif for the CLOCK-BMAL1 heterodimer is 5'-CACGTGA-3', which contains a flanking adenine nucleotide at the 3-prime end of the canonical 6-nucleotide E-box sequence. CLOCK specifically binds to the half-site 5'-CAC-3', while BMAL1 binds to the half-site 5'-GTGA-3'. The CLOCK-BMAL1 heterodimer also recognizes the non-canonical E-box motifs 5'-AACGTGA-3' and 5'-CATGTGA-3'. Essential for the rhythmic interaction of CLOCK with ASS1 and plays a critical role in positively regulating CLOCK-mediated acetylation of ASS1. Plays a role in protecting against lethal sepsis by limiting the expression of immune checkpoint protein CD274 in macrophages in a PKM2-dependent manner. Regulates the diurnal rhythms of skeletal muscle metabolism via transcriptional activation of genes promoting triglyceride synthesis (DGAT2) and metabolic efficiency (COQ10B). The chain is Basic helix-loop-helix ARNT-like protein 1 (Bmal1) from Nannospalax galili (Northern Israeli blind subterranean mole rat).